We begin with the raw amino-acid sequence, 37 residues long: Photosystem II reaction center protein T (37 aa).

Residues 3–23 (ALVYTFLLVGTLGIIFFAIFF) traverse the membrane as a helical segment.

The protein belongs to the PsbT family. In terms of assembly, PSII is composed of 1 copy each of membrane proteins PsbA, PsbB, PsbC, PsbD, PsbE, PsbF, PsbH, PsbI, PsbJ, PsbK, PsbL, PsbM, PsbT, PsbY, PsbZ, Psb30/Ycf12, at least 3 peripheral proteins of the oxygen-evolving complex and a large number of cofactors. It forms dimeric complexes.

Its subcellular location is the plastid. The protein localises to the chloroplast thylakoid membrane. In terms of biological role, found at the monomer-monomer interface of the photosystem II (PS II) dimer, plays a role in assembly and dimerization of PSII. PSII is a light-driven water plastoquinone oxidoreductase, using light energy to abstract electrons from H(2)O, generating a proton gradient subsequently used for ATP formation. This Spirogyra maxima (Green alga) protein is Photosystem II reaction center protein T.